Here is a 165-residue protein sequence, read N- to C-terminus: Nucleotide-binding protein SYNW1816 (165 aa).

It belongs to the YajQ family.

Its function is as follows. Nucleotide-binding protein. This is Nucleotide-binding protein SYNW1816 from Parasynechococcus marenigrum (strain WH8102).